The chain runs to 25 residues: MENGKVHVASMSGLSMPHMNEMLEK.

The segment at 1–25 (MENGKVHVASMSGLSMPHMNEMLEK) is disordered.

This chain is Unknown protein 7, found in Pseudotsuga menziesii (Douglas-fir).